Reading from the N-terminus, the 109-residue chain is Non-structural protein ORF4a (109 aa).

As to quaternary structure, interacts with host PRKRA/PACT.

It localises to the host cytoplasm. In terms of biological role, dsRNA-binding protein that plays a role in the inhibition of host innate response. Suppresses host PACT-induced activation of RIGI and MDA5 and thereby circumvents the production of type I interferons. Also prevents the activation of host NF-kappa-B. Inhibits the integrated stress response (ISR) in the infected cell by binding to dsRNA and inhibiting EIF2AK2-mediated phosphorylation of EIF2S1/eIF2-alpha. Stress granule formation is thus inhibited, which allows protein synthesis and viral replication. In Middle East respiratory syndrome-related coronavirus (isolate United Kingdom/H123990006/2012) (MERS-CoV), this protein is Non-structural protein ORF4a (ORF4a).